The sequence spans 292 residues: Inositol oxygenase (292 aa).

Substrate contacts are provided by residues arginine 33 and 88–90 (DES). Positions 101, 128, and 129 each coordinate Fe cation. Substrate contacts are provided by residues lysine 132 and 149-150 (GD). The Fe cation site is built by histidine 201, histidine 227, and aspartate 260. 227 to 228 (HS) is a binding site for substrate.

Belongs to the myo-inositol oxygenase family. Requires Fe cation as cofactor.

Its subcellular location is the cytoplasm. It carries out the reaction myo-inositol + O2 = D-glucuronate + H2O + H(+). Its pathway is polyol metabolism; myo-inositol degradation into D-glucuronate; D-glucuronate from myo-inositol: step 1/1. In Dictyostelium discoideum (Social amoeba), this protein is Inositol oxygenase (miox).